We begin with the raw amino-acid sequence, 103 residues long: Large ribosomal subunit protein uL22c (103 aa).

The protein belongs to the universal ribosomal protein uL22 family. In terms of assembly, part of the 50S ribosomal subunit.

The protein resides in the plastid. It localises to the chloroplast. Its function is as follows. This protein binds specifically to 23S rRNA. Functionally, the globular domain of the protein is located near the polypeptide exit tunnel on the outside of the subunit, while an extended beta-hairpin is found that lines the wall of the exit tunnel in the center of the 70S ribosome. This is Large ribosomal subunit protein uL22c (rpl22) from Cyanidium caldarium (Red alga).